The sequence spans 239 residues: MGRKWNNIKEKKASKDANTSRIYAKFGREIYVAAKQGEPDPELNQNLKFVLERAKTYNVPKAIIERAIEKAKGGSEENYDELRYEGFGPNGAMVIVDALTNNVNRTAADVRSTFGKNGGNMGVSGSVAYMFDPTAVIGFEGKTADETLELLMEADIDVRDILEEDDAVIVYAEPDQFHAVQEALQNAGITEFTVAELTMLAQNDVALPEDARAQFEKLIDALEDLEDVQQVYHNVDLGA.

Belongs to the TACO1 family. YeeN subfamily.

Its subcellular location is the cytoplasm. This is Probable transcriptional regulatory protein BLi00754/BL02339 from Bacillus licheniformis (strain ATCC 14580 / DSM 13 / JCM 2505 / CCUG 7422 / NBRC 12200 / NCIMB 9375 / NCTC 10341 / NRRL NRS-1264 / Gibson 46).